The chain runs to 250 residues: Hydroxyethylthiazole kinase (250 aa).

A substrate-binding site is contributed by Met39. Positions 114 and 159 each coordinate ATP. Gly186 is a binding site for substrate.

The protein belongs to the Thz kinase family. Mg(2+) is required as a cofactor.

The catalysed reaction is 5-(2-hydroxyethyl)-4-methylthiazole + ATP = 4-methyl-5-(2-phosphooxyethyl)-thiazole + ADP + H(+). It participates in cofactor biosynthesis; thiamine diphosphate biosynthesis; 4-methyl-5-(2-phosphoethyl)-thiazole from 5-(2-hydroxyethyl)-4-methylthiazole: step 1/1. Functionally, catalyzes the phosphorylation of the hydroxyl group of 4-methyl-5-beta-hydroxyethylthiazole (THZ). This chain is Hydroxyethylthiazole kinase, found in Lactococcus lactis subsp. cremoris (strain MG1363).